A 442-amino-acid chain; its full sequence is ATP-dependent RNA helicase SUB2 (442 aa).

The Q motif motif lies at 59 to 87 (TGFRDFLLKPELLRAISDLGFEHPSEVQQ). Residues 90–265 (IPQAILGTDV…KKFMQSPLEI (176 aa)) form the Helicase ATP-binding domain. 103 to 110 (AKSGMGKT) is a binding site for ATP. The DECD box motif lies at 212–215 (DECD). Positions 277–438 (GLQQFYLKLE…TLPETVDPAT (162 aa)) constitute a Helicase C-terminal domain.

It belongs to the DEAD box helicase family. DECD subfamily.

The protein localises to the nucleus. The catalysed reaction is ATP + H2O = ADP + phosphate + H(+). In terms of biological role, ATP-binding RNA helicase involved in transcription elongation and required for the export of mRNA out of the nucleus. SUB2 also plays a role in pre-mRNA splicing and spliceosome assembly. May be involved in rDNA and telomeric silencing, and maintenance of genome integrity. The polypeptide is ATP-dependent RNA helicase SUB2 (SUB2) (Cryptococcus neoformans var. neoformans serotype D (strain JEC21 / ATCC MYA-565) (Filobasidiella neoformans)).